A 273-amino-acid chain; its full sequence is Thioredoxin-like 1-3, chloroplastic (273 aa).

The N-terminal 44 residues, 1–44, are a transit peptide targeting the chloroplast; sequence MATDSFIKLNPISFNRARFDLRDFAGISPKSISSLCCISPRLIS. In terms of domain architecture, Thioredoxin spans 62 to 202; it reads LFSKKKIPAF…FKEALEKHGR (141 aa). Catalysis depends on nucleophile residues Cys125 and Cys128. Cys125 and Cys128 form a disulfide bridge.

It belongs to the thioredoxin family.

Its subcellular location is the plastid. It is found in the chloroplast. Its function is as follows. Probable thiol-disulfide oxidoreductase that may participate in various redox reactions. The protein is Thioredoxin-like 1-3, chloroplastic of Arabidopsis thaliana (Mouse-ear cress).